The primary structure comprises 141 residues: Plasmatocyte-spreading peptide (141 aa).

The signal sequence occupies residues 1 to 22; the sequence is MKLTINILFCLILISQYNSANG. A propeptide spanning residues 23–118 is cleaved from the precursor; the sequence is NLRDLFNNVR…ATGGKDDKGR (96 aa). Residues 46–58 are compositionally biased toward basic and acidic residues; sequence VKTLFHPSDKSGN. Residues 46–118 form a disordered region; the sequence is VKTLFHPSDK…ATGGKDDKGR (73 aa). Residues 83–98 show a composition bias toward low complexity; sequence PVAVTPAPVVSTTTQA. A compositionally biased stretch (polar residues) spans 99–108; it reads SAPTVATNGT. Cysteines 125 and 137 form a disulfide.

Belongs to the GBP/PSP1/paralytic peptide family.

Mediates the spreading of plasmatocytes to foreign surfaces. Plasmocytes are a class of hemocytes involved in insect cellular immunity. This is Plasmatocyte-spreading peptide (PSP1) from Chrysodeixis includens (Soybean looper).